Here is a 183-residue protein sequence, read N- to C-terminus: uncharacterized protein (183 aa).

The first 23 residues, 1–23 (MSAFKKSLLVAGVAMILSNNVFA), serve as a signal peptide directing secretion. Cysteines 41 and 80 form a disulfide.

This sequence belongs to the fimbrial protein family.

It localises to the fimbrium. This is an uncharacterized protein from Escherichia coli (strain K12).